A 268-amino-acid polypeptide reads, in one-letter code: Ribosomal RNA small subunit methyltransferase A (268 aa).

Residues Asn-12, Leu-14, Gly-38, Glu-59, Asp-82, and Asn-107 each coordinate S-adenosyl-L-methionine.

Belongs to the class I-like SAM-binding methyltransferase superfamily. rRNA adenine N(6)-methyltransferase family. RsmA subfamily.

The protein localises to the cytoplasm. The catalysed reaction is adenosine(1518)/adenosine(1519) in 16S rRNA + 4 S-adenosyl-L-methionine = N(6)-dimethyladenosine(1518)/N(6)-dimethyladenosine(1519) in 16S rRNA + 4 S-adenosyl-L-homocysteine + 4 H(+). Functionally, specifically dimethylates two adjacent adenosines (A1518 and A1519) in the loop of a conserved hairpin near the 3'-end of 16S rRNA in the 30S particle. May play a critical role in biogenesis of 30S subunits. This Onion yellows phytoplasma (strain OY-M) protein is Ribosomal RNA small subunit methyltransferase A.